Here is a 164-residue protein sequence, read N- to C-terminus: Protein SprT (164 aa).

Residues 12-157 (CFLQAESFFK…CRRCRQTLVF (146 aa)) form the SprT-like domain. H69 is a binding site for Zn(2+). E70 is a catalytic residue. A Zn(2+)-binding site is contributed by H73.

This sequence belongs to the SprT family. The cofactor is Zn(2+).

The protein resides in the cytoplasm. The chain is Protein SprT from Pseudomonas fluorescens (strain SBW25).